The sequence spans 563 residues: MDTKTLIASEIAKVVPELEQDAIFNLLETPKNSDMGDLAFPAFSLAKVLRKAPQMIASELAEQIDESQFEKVVAVGPYINFFLDKTKISSQVLEQVITAGSDYAQQDEGQGRNVAIDMSSPNIAKPFSIGHLRSTVIGDSLAHIFAKMGYKPVKINHLGDWGKQFGMLIVAYKKWGDEAAVQAHPIDELLKLYVRINAEAETDPTVDEEAREWFRKLEDGDKEATELWQWFRDESLLEFNRLYDQLHVTFDSYNGEAFYNDKMDEVLDLLEAKNLLVESKGAQVVNLEKYGIEHPALIKKSDGATLYITRDLAAALYRKRTYDFAKSVYVVGNEQAAHFKQLKAVLKEMGYDWSDDMTHVAFGLVTKGGAKLSTRKGNVILLEPTVAEAINRAASQIEAKNPNLADKEAVAHSVGVGAIKFYDLKTDRMNGYDFDLEAMVSFEGETGPYVQYAHARIQSILRKADFTPSATTTYSLADAESWEIIKLIQDFPRIIKRTSDNFEPSIMAKFAINLAQSFNKYYAHTRILDDNSERDNRLALCYATATVLKEALRLLGVDAPNEM.

Positions 121–131 (PNIAKPFSIGH) match the 'HIGH' region motif.

Belongs to the class-I aminoacyl-tRNA synthetase family. In terms of assembly, monomer.

It localises to the cytoplasm. The catalysed reaction is tRNA(Arg) + L-arginine + ATP = L-arginyl-tRNA(Arg) + AMP + diphosphate. The polypeptide is Arginine--tRNA ligase (Streptococcus pyogenes serotype M2 (strain MGAS10270)).